Reading from the N-terminus, the 1427-residue chain is Lysophospholipase NTE1 (1427 aa).

The Cytoplasmic segment spans residues 1-60; sequence MDSLHVSSTSVLVDVVEAVETATSLVVDTAEAVATEQATPTAVISNALARSAYAAHTSLS. A helical membrane pass occupies residues 61-81; it reads YLAWAFGLWFLRLIGWVCYGI. Topologically, residues 82-96 are lumenal; it reads PTYVLGLLGRTINIS. A helical transmembrane segment spans residues 97 to 117; it reads LQFSSLLLILIALVTVVVAVV. The Cytoplasmic segment spans residues 118 to 1427; the sequence is RYKYLTVYSR…KRTIARRNSI (1310 aa). The span at 281–296 shows a compositional bias: polar residues; sequence PMTSASDVPNMSLSSD. The disordered stretch occupies residues 281–315; it reads PMTSASDVPNMSLSSDGSDDLQKGEPQFGEPRLSE. A nucleoside 3',5'-cyclic phosphate is bound by residues 615–735 and 731–870; these read LMAA…LTKV and SLTK…VASR. The segment at 787–807 is disordered; that stretch reads GIVGGESGDAKDGKSHRKNLT. A PNPLA domain is found at 1124–1288; that stretch reads LVLGGGGARG…VDNLPVSEMK (165 aa). Residues 1128–1133 carry the GXGXXG motif; the sequence is GGGARG. The short motif at 1155–1159 is the GXSXG element; the sequence is GTSIG. S1157 acts as the Nucleophile in catalysis. Residue D1275 is the Proton acceptor of the active site. The DGA/G motif lies at 1275–1277; it reads DGG.

It belongs to the NTE family.

Its subcellular location is the endoplasmic reticulum membrane. The enzyme catalyses a 1-acyl-sn-glycero-3-phosphocholine + H2O = sn-glycerol 3-phosphocholine + a fatty acid + H(+). Its activity is regulated as follows. Inhibited by organophosphorus esters. Intracellular phospholipase B that catalyzes the double deacylation of phosphatidylcholine (PC) to glycerophosphocholine (GroPCho). Plays an important role in membrane lipid homeostasis. Responsible for the rapid PC turnover in response to inositol, elevated temperatures, or when choline is present in the growth medium. The protein is Lysophospholipase NTE1 (NTE1) of Yarrowia lipolytica (strain CLIB 122 / E 150) (Yeast).